The chain runs to 191 residues: MIVTPVSEVEGEFFKTWSPSMKSTSSNSCNSKNHIDTRDINSFYPSPVEDSEAFIPNNQPYSFLLVDDNEINLRIFRRMLLKLFPNASVRTVQESASVEISHRTLSHYHLIFLDIEMPIVTGTEIASKVRSSRELDQVGLIAVTTKYLCADLELYEKLGFDFTFRKPVEYPTNYILQKIEQVLQTRCGGRV.

Residues 62–181 form the Response regulatory domain; it reads SFLLVDDNEI…TNYILQKIEQ (120 aa). 4-aspartylphosphate is present on Asp-114.

In terms of biological role, required for stress adaptation, morphogenesis and virulence. The polypeptide is Stress response regulator protein 1 (SRR1) (Clavispora lusitaniae (strain ATCC 42720) (Yeast)).